A 504-amino-acid polypeptide reads, in one-letter code: MSFSVDVLANIAIELQRGIGHQDRFQRLITTLRQVLECDASALLRYDSRQFIPLAIDGLAKDVLGRRFALEGHPRLEAIARAGDVVRFPADSELPDPYDGLIPGQESLKVHACVGLPLFAGQNLIGALTLDGMQPDQFDVFSDEELRLIAALAAGALSNALLIEQLESQNMMPGDATPFEAVKQTQMIGLSPGMTQLKKEIEIVAASDLNVLISGETGTGKELVAKAIHEASPRAVNPLVYLNCAALPESVAESELFGHVKGAFTGAISNRSGKFEMADNGTLFLDEIGELSLALQAKLLRVLQYGDIQRVGDDRSLRVDVRVLAATNRDLREEVLAGRFRADLFHRLSVFPLSVPPLRERGDDVILLAGYFCEQCRLRLGLSRVVLSAGARNLLQHYSFPGNVRELEHAIHRAVVLSRATRSGDEVILEAQHFAFPEVTLPPPEAAAVPVVKQNLREATEAFQRETIRQALAQNHHNWAACARMLETDVANLHRLAKRLGLKD.

D57 carries the 4-aspartylphosphate modification. A Sigma-54 factor interaction domain is found at 187–416 (MIGLSPGMTQ…LEHAIHRAVV (230 aa)). Residues 215 to 222 (GETGTGKE) and 278 to 287 (ADNGTLFLDE) each bind ATP. The H-T-H motif DNA-binding region spans 479–498 (WAACARMLETDVANLHRLAK).

The protein operates within nitrogen metabolism; nitric oxide reduction. Functionally, required for the expression of anaerobic nitric oxide (NO) reductase, acts as a transcriptional activator for at least the norVW operon. Activation also requires sigma-54. This Escherichia coli O139:H28 (strain E24377A / ETEC) protein is Anaerobic nitric oxide reductase transcription regulator NorR.